The sequence spans 84 residues: Dolichol phosphate-mannose biosynthesis regulatory protein (84 aa).

The next 2 helical transmembrane spans lie at 11 to 31 and 49 to 69; these read FGLVAVSLIIFTYYTTWVILL and YAVLIPLATGLLLLLFVGLFI.

It belongs to the DPM2 family. As to quaternary structure, component of the dolichol-phosphate mannose (DPM) synthase complex composed of DPM1, DPM2 and DPM3; in the complex interacts directly with DPM3. Component of the glycosylphosphatidylinositol-N-acetylglucosaminyltransferase (GPI-GnT) complex composed at least by PIGA, PIGC, PIGH, PIGP, PIGQ, PIGY and DPM2. Interacts with PIGA, PIGC and PIGQ.

The protein localises to the endoplasmic reticulum membrane. It functions in the pathway protein modification; protein glycosylation. Functionally, regulates the biosynthesis of dolichol phosphate-mannose. Regulatory subunit of the dolichol-phosphate mannose (DPM) synthase complex; essential for the ER localization and stable expression of DPM1. Part of the glycosylphosphatidylinositol-N-acetylglucosaminyltransferase (GPI-GnT) complex that catalyzes the transfer of N-acetylglucosamine from UDP-N-acetylglucosamine to phosphatidylinositol and participates in the first step of GPI biosynthesis. May act by regulating the GPI-GNT complex. This chain is Dolichol phosphate-mannose biosynthesis regulatory protein, found in Cricetulus griseus (Chinese hamster).